The following is a 61-amino-acid chain: Overexpressed in colon carcinoma 1 protein homolog (61 aa).

Residues 1 to 13 are compositionally biased toward polar residues; the sequence is MGCGNSTAASTTP. A disordered region spans residues 1 to 61; that stretch reads MGCGNSTAAS…AGQTASTHKE (61 aa). Basic and acidic residues predominate over residues 18–34; sequence SAKDVQDDSSMDEEKRR. Positions 48–61 are enriched in polar residues; it reads TNETAGQTASTHKE.

This sequence belongs to the OCC1 family.

The sequence is that of Overexpressed in colon carcinoma 1 protein homolog (si:dkey-261e22.4) from Danio rerio (Zebrafish).